Here is a 150-residue protein sequence, read N- to C-terminus: Probable cyclase FGR4 (150 aa).

The protein operates within secondary metabolite biosynthesis. In terms of biological role, probable cyclase; part of the gene cluster that mediates the biosynthesis of the tetraketides fugralins such as linear fugralin A and cyclic fugralin B, volatile compounds that play a role in the asexual reproductive cycle but are not involved in pathogenicity. Fugralin B is similar to fugralin A except for a cyclization between the carboxylic acid C-8 and the alcohol on C-4 resulting in a six membered lactone ring, probably catalyzed by the cyclase FGR4. One of the key features of fugralins is the presence of a double methyl group, which is only rarely encountered in fungal secondary metabolites. As the fugralins cluster does not contain an independent methyltransferase, the PKS FGR1 is probably responsible for adding two methyl groups to the same carbon atom. The exact role of the individual cluster genes remains unknown and further work is needed to unravel the biosynthetic pathway. The sequence is that of Probable cyclase FGR4 from Gibberella zeae (strain ATCC MYA-4620 / CBS 123657 / FGSC 9075 / NRRL 31084 / PH-1) (Wheat head blight fungus).